The following is a 256-amino-acid chain: Pimeloyl-[acyl-carrier protein] methyl ester esterase (256 aa).

In terms of domain architecture, AB hydrolase-1 spans 15-242 (HLVLLHGWGL…AAHAPFISHP (228 aa)). Substrate is bound by residues Trp22, 82 to 83 (SL), and 143 to 147 (FLALQ). The Nucleophile role is filled by Ser82. Residues Asp207 and His235 contribute to the active site. His235 lines the substrate pocket.

This sequence belongs to the AB hydrolase superfamily. Carboxylesterase BioH family. In terms of assembly, monomer.

It localises to the cytoplasm. It catalyses the reaction 6-carboxyhexanoyl-[ACP] methyl ester + H2O = 6-carboxyhexanoyl-[ACP] + methanol + H(+). Its pathway is cofactor biosynthesis; biotin biosynthesis. The physiological role of BioH is to remove the methyl group introduced by BioC when the pimeloyl moiety is complete. It allows to synthesize pimeloyl-ACP via the fatty acid synthetic pathway through the hydrolysis of the ester bonds of pimeloyl-ACP esters. This chain is Pimeloyl-[acyl-carrier protein] methyl ester esterase, found in Escherichia fergusonii (strain ATCC 35469 / DSM 13698 / CCUG 18766 / IAM 14443 / JCM 21226 / LMG 7866 / NBRC 102419 / NCTC 12128 / CDC 0568-73).